The following is a 432-amino-acid chain: Trigger factor (432 aa).

Residues 161-246 (GTRATINFVG…VVKVEARELP (86 aa)) form the PPIase FKBP-type domain.

It belongs to the FKBP-type PPIase family. Tig subfamily.

The protein resides in the cytoplasm. The enzyme catalyses [protein]-peptidylproline (omega=180) = [protein]-peptidylproline (omega=0). Involved in protein export. Acts as a chaperone by maintaining the newly synthesized protein in an open conformation. Functions as a peptidyl-prolyl cis-trans isomerase. The sequence is that of Trigger factor from Aliivibrio salmonicida (strain LFI1238) (Vibrio salmonicida (strain LFI1238)).